Here is a 478-residue protein sequence, read N- to C-terminus: TFIIA-alpha and beta-like factor (478 aa).

Residues 309 to 427 (VKQPRNIEEP…SGDDVSEQDV (119 aa)) form a disordered region. The segment covering 390–401 (SISNEDSATNSS) has biased composition (polar residues). A compositionally biased stretch (acidic residues) spans 411-427 (VEEDPLNSGDDVSEQDV).

Belongs to the TFIIA subunit 1 family. In terms of tissue distribution, testis specific. Detected in adult testis mostly in round and elongating spermatids (at protein level). Detected in testis.

It localises to the nucleus. In terms of biological role, may function as a testis specific transcription factor. Binds DNA in conjunction with GTF2A2 and TBP (the TATA-binding protein) and together with GTF2A2, allows mRNA transcription. The protein is TFIIA-alpha and beta-like factor (GTF2A1L) of Homo sapiens (Human).